Reading from the N-terminus, the 501-residue chain is Aspartate--tRNA ligase, cytoplasmic (501 aa).

Position 52 is a phosphothreonine (Thr52). N6-acetyllysine is present on Lys74. Glu229 contacts L-aspartate. Ser249 is subject to Phosphoserine. An aspartate region spans residues 251 to 254 (QLYK). Residue Arg273 coordinates L-aspartate. Residues 273-275 (RAE) and 281-283 (RHL) each bind ATP. Lys374 is modified (N6-acetyllysine). Glu424 contributes to the ATP binding site. Ser427 and Arg431 together coordinate L-aspartate. An ATP-binding site is contributed by 472–475 (GLER).

The protein belongs to the class-II aminoacyl-tRNA synthetase family. Type 2 subfamily. In terms of assembly, homodimer. Part of a multisubunit complex that groups tRNA ligases for Arg (RARS1), Asp (DARS1), Gln (QARS1), Ile (IARS1), Leu (LARS1), Lys (KARS1), Met (MARS1) the bifunctional ligase for Glu and Pro (EPRS1) and the auxiliary subunits AIMP1/p43, AIMP2/p38 and EEF1E1/p18.

The protein resides in the cytoplasm. The catalysed reaction is tRNA(Asp) + L-aspartate + ATP = L-aspartyl-tRNA(Asp) + AMP + diphosphate. Catalyzes the specific attachment of an amino acid to its cognate tRNA in a 2 step reaction: the amino acid (AA) is first activated by ATP to form AA-AMP and then transferred to the acceptor end of the tRNA. The chain is Aspartate--tRNA ligase, cytoplasmic (Dars1) from Rattus norvegicus (Rat).